The sequence spans 283 residues: uncharacterized protein (283 aa).

The first 25 residues, 1-25 (MNKKRLLFRTPLDALFLLFGTALSA), serve as a signal peptide directing secretion. Cysteine 26 carries N-palmitoyl cysteine lipidation. Residue cysteine 26 is the site of S-diacylglycerol cysteine attachment.

The protein belongs to the MG439/MG440 family.

The protein localises to the cell membrane. This is an uncharacterized protein from Mycoplasma pneumoniae (strain ATCC 29342 / M129 / Subtype 1) (Mycoplasmoides pneumoniae).